Here is a 283-residue protein sequence, read N- to C-terminus: NAD kinase (283 aa).

The Proton acceptor role is filled by Asp68. NAD(+) is bound by residues 68 to 69 (DG), Arg73, 142 to 143 (ND), Arg153, Arg170, Asp172, and 183 to 188 (TAYSLS).

Belongs to the NAD kinase family. A divalent metal cation is required as a cofactor.

The protein resides in the cytoplasm. It catalyses the reaction NAD(+) + ATP = ADP + NADP(+) + H(+). Functionally, involved in the regulation of the intracellular balance of NAD and NADP, and is a key enzyme in the biosynthesis of NADP. Catalyzes specifically the phosphorylation on 2'-hydroxyl of the adenosine moiety of NAD to yield NADP. This Symbiobacterium thermophilum (strain DSM 24528 / JCM 14929 / IAM 14863 / T) protein is NAD kinase.